Here is a 262-residue protein sequence, read N- to C-terminus: MINLAYDDNGTGDPVVFIAGRGGAGRTWHPHQVPAFLAAGYRCITFDNRGIGATENAEGFTTQTMVADTAALIETLDIAPARVVGVSMGAFIAQELMVVAPELVSSAVLMATRGRLDRARQFFNKAEAELYDSGVQLPPTYDARARLLENFSRKTLNDDVAVGDWIAMFSMWPIKSTPGLRCQLDCAPQTNRLPAYRNIAAPVLVIGFADDVVTPPYLGREVADALPNGRYLQIPDAGHLGFFERPEAVNTAMLKFFASVKA.

Residues Arg-21, 87 to 88 (SM), and Arg-120 each bind substrate. The active site involves Ser-87. Active-site residues include Asp-211 and His-239. His-239 is a binding site for substrate.

This sequence belongs to the AB hydrolase superfamily. In terms of assembly, homodimer.

This chain is Putative non-heme bromoperoxidase BpoC (bpoC), found in Mycobacterium tuberculosis (strain CDC 1551 / Oshkosh).